A 361-amino-acid polypeptide reads, in one-letter code: S-adenosylmethionine:tRNA ribosyltransferase-isomerase (361 aa).

The protein belongs to the QueA family. As to quaternary structure, monomer.

It is found in the cytoplasm. It catalyses the reaction 7-aminomethyl-7-carbaguanosine(34) in tRNA + S-adenosyl-L-methionine = epoxyqueuosine(34) in tRNA + adenine + L-methionine + 2 H(+). The protein operates within tRNA modification; tRNA-queuosine biosynthesis. In terms of biological role, transfers and isomerizes the ribose moiety from AdoMet to the 7-aminomethyl group of 7-deazaguanine (preQ1-tRNA) to give epoxyqueuosine (oQ-tRNA). The chain is S-adenosylmethionine:tRNA ribosyltransferase-isomerase from Actinobacillus pleuropneumoniae serotype 7 (strain AP76).